A 169-amino-acid chain; its full sequence is Peptide methionine sulfoxide reductase MsrA (169 aa).

The active site involves Cys10.

Belongs to the MsrA Met sulfoxide reductase family.

It carries out the reaction L-methionyl-[protein] + [thioredoxin]-disulfide + H2O = L-methionyl-(S)-S-oxide-[protein] + [thioredoxin]-dithiol. The enzyme catalyses [thioredoxin]-disulfide + L-methionine + H2O = L-methionine (S)-S-oxide + [thioredoxin]-dithiol. Has an important function as a repair enzyme for proteins that have been inactivated by oxidation. Catalyzes the reversible oxidation-reduction of methionine sulfoxide in proteins to methionine. In Streptococcus pyogenes serotype M2 (strain MGAS10270), this protein is Peptide methionine sulfoxide reductase MsrA.